The chain runs to 632 residues: Biosynthetic arginine decarboxylase (632 aa).

Lys101 bears the N6-(pyridoxal phosphate)lysine mark. Position 281–291 (281–291) interacts with substrate; it reads FDVGGGLGVDY.

Belongs to the Orn/Lys/Arg decarboxylase class-II family. SpeA subfamily. Requires Mg(2+) as cofactor. It depends on pyridoxal 5'-phosphate as a cofactor.

The enzyme catalyses L-arginine + H(+) = agmatine + CO2. It functions in the pathway amine and polyamine biosynthesis; agmatine biosynthesis; agmatine from L-arginine: step 1/1. In terms of biological role, catalyzes the biosynthesis of agmatine from arginine. In Salmonella agona (strain SL483), this protein is Biosynthetic arginine decarboxylase.